The primary structure comprises 234 residues: Demethylmenaquinone methyltransferase (234 aa).

Residues T58, D79, and 106–107 each bind S-adenosyl-L-methionine; that span reads NA.

This sequence belongs to the class I-like SAM-binding methyltransferase superfamily. MenG/UbiE family.

The enzyme catalyses a 2-demethylmenaquinol + S-adenosyl-L-methionine = a menaquinol + S-adenosyl-L-homocysteine + H(+). It functions in the pathway quinol/quinone metabolism; menaquinone biosynthesis; menaquinol from 1,4-dihydroxy-2-naphthoate: step 2/2. Methyltransferase required for the conversion of demethylmenaquinol (DMKH2) to menaquinol (MKH2). The polypeptide is Demethylmenaquinone methyltransferase (Geobacillus kaustophilus (strain HTA426)).